Here is a 108-residue protein sequence, read N- to C-terminus: Large ribosomal subunit protein eL36x (108 aa).

Disordered stretches follow at residues 13–34 and 75–108; these read GHVV…KTSK and KLGT…EKKK. The segment covering 75–84 has biased composition (basic residues); the sequence is KLGTHKRAKR.

Belongs to the eukaryotic ribosomal protein eL36 family.

This is Large ribosomal subunit protein eL36x (RPL36C) from Arabidopsis thaliana (Mouse-ear cress).